Consider the following 556-residue polypeptide: Formate--tetrahydrofolate ligase (556 aa).

ATP is bound at residue 65-72; the sequence is TPAGEGKT.

It belongs to the formate--tetrahydrofolate ligase family.

The enzyme catalyses (6S)-5,6,7,8-tetrahydrofolate + formate + ATP = (6R)-10-formyltetrahydrofolate + ADP + phosphate. It participates in one-carbon metabolism; tetrahydrofolate interconversion. The sequence is that of Formate--tetrahydrofolate ligase from Proteus mirabilis (strain HI4320).